A 484-amino-acid chain; its full sequence is MDLTNRMMEPEEFARQRQEVLNQWATGRDVDFEEAVAYHKNLPRSKNFSYKLAEGKARGITFAQPRAGVALLNEHLELLRFLEEEGEADFLPTTIDSYTRQNRYAEAQTGIDESRLVGRSMLNGFPAVNHGVSACRRLIEHPKVPVQVRHGTPDARLLAEITLAGGFTAYEGGGISYNIPYAKDVSIEKSIKYWQYVDRLVGMYEEKGVSINREPFGPLTGTLVPPSVSHGVAVIEGILAVAQGVRSLTLGYGQCGNLLQDVAAIRTLPLLAAEYLSKLGYTDFDITTVFHQWMGGFPQDEAKAYGVISWGAAAAALGKATKVIVKSPHEALGIPTKEANAAGIRTTKQILNMLKDQSLPMTEELALEEKMIREETRAILDRTLDLGEGDMAVGAVRAFQAGVIDVPFAPSRYNGGRILPARDSQGAVRVLDFGNLPFSEEIKEFHRERIARRGRDEGREPSFQMVIDDIYAIGKGMLVGRPRS.

Residue arginine 66 participates in L-glutamate binding. Residue glycine 68 coordinates adenosylcob(III)alamin. L-glutamate is bound at residue arginine 100. Adenosylcob(III)alamin is bound at residue asparagine 123. L-glutamate is bound by residues 149-150 (RH), glutamate 171, and tyrosine 177. Proline 180 serves as a coordination point for adenosylcob(III)alamin. Tyrosine 181 contacts L-glutamate. 4 residues coordinate adenosylcob(III)alamin: phenylalanine 297, lysine 326, glutamate 330, and isoleucine 334.

It belongs to the methylaspartate mutase GlmE subunit family. As to quaternary structure, heterotetramer composed of 2 epsilon subunits (GlmE) and 2 sigma subunits (GlmS). GlmE exists as a homodimer and GlmS as a monomer. Adenosylcob(III)alamin is required as a cofactor.

It catalyses the reaction (2S,3S)-3-methyl-L-aspartate = L-glutamate. It participates in amino-acid degradation; L-glutamate degradation via mesaconate pathway; acetate and pyruvate from L-glutamate: step 1/4. In terms of biological role, catalyzes the carbon skeleton rearrangement of L-glutamate to L-threo-3-methylaspartate ((2S,3S)-3-methylaspartate). The polypeptide is Glutamate mutase epsilon subunit (Desulfitobacterium hafniense (strain Y51)).